The primary structure comprises 224 residues: PKHD-type hydroxylase SO_3913 (224 aa).

The Fe2OG dioxygenase domain maps to 78–176; sequence QFYPPLFNRY…RTSAFMWLQS (99 aa). The Fe cation site is built by His-96, Asp-98, and His-157. Arg-167 contributes to the 2-oxoglutarate binding site.

Fe(2+) is required as a cofactor. It depends on L-ascorbate as a cofactor.

This is PKHD-type hydroxylase SO_3913 from Shewanella oneidensis (strain ATCC 700550 / JCM 31522 / CIP 106686 / LMG 19005 / NCIMB 14063 / MR-1).